We begin with the raw amino-acid sequence, 865 residues long: Anaphase-promoting complex subunit 6 (865 aa).

TPR repeat units lie at residues 11–42 (IEKQ…LNLV), 46–75 (SKEY…LIQK), and 88–149 (EDYQ…LQIL). The tract at residues 153 to 293 (NDSSENMDDE…NNNNNNNNNF (141 aa)) is disordered. Acidic residues predominate over residues 183-202 (NCDDDDDDDDDDDDDDDDEK). The segment covering 249 to 292 (NKNNNKNNNNNNNNNNNNNNNNNNNNNNNNNNNNNNNNNNNNNN) has biased composition (low complexity). TPR repeat units lie at residues 300 to 331 (IRSS…ALLT), 336 to 359 (FEAF…LLEK), 366 to 438 (DSWI…DIST), 478 to 506 (DIQT…ILKQ), 515 to 542 (CLMV…LVDS), 573 to 602 (AISW…STTL), 607 to 635 (GASW…TSSR), 642 to 670 (LPLL…AKDI), and 675 to 709 (PMIF…KIKS). Low complexity predominate over residues 403–434 (SNNNTFGANNNNNNNNNNNNNNNNNNNNNSNN). The disordered stretch occupies residues 403–436 (SNNNTFGANNNNNNNNNNNNNNNNNNNNNSNNDI). The tract at residues 738 to 767 (GIGNNNNNNNNRRTTTTTTTTSNNQKKNSS) is disordered. TPR repeat units follow at residues 777–809 (ESWE…SLSL) and 814–843 (PSTY…SLSI).

The protein belongs to the APC6/CDC16 family. In terms of assembly, the APC/C is composed of at least 13 subunits that stay tightly associated throughout the cell cycle: anapc1, anapc2, anapc3, anapc4, anapc5, anapc6, anapc7, anapc8, anapc10, anapc11, cdc20, cdc26 and cdh1.

It localises to the nucleus. It functions in the pathway protein modification; protein ubiquitination. Functionally, component of the anaphase promoting complex/cyclosome (APC/C), a cell cycle-regulated E3 ubiquitin-protein ligase complex that controls progression through mitosis and the G1 phase of the cell cycle. This chain is Anaphase-promoting complex subunit 6 (anapc6), found in Dictyostelium discoideum (Social amoeba).